Consider the following 170-residue polypeptide: RxLR effector protein PITG_07555 (170 aa).

Positions 1–17 (MQAYHLLLVCMYISCSA) are cleaved as a signal peptide. The RxLR-dEER motif lies at 50–62 (RALRTHNPDREER).

The protein belongs to the RxLR effector family.

It localises to the secreted. It is found in the host cytoplasm. The protein resides in the host nucleus. Its function is as follows. Effector that enhances P.infestans colonization of Nicotiana benthamiana leaves. This chain is RxLR effector protein PITG_07555, found in Phytophthora infestans (strain T30-4) (Potato late blight agent).